Here is a 303-residue protein sequence, read N- to C-terminus: Glycine--tRNA ligase alpha subunit (303 aa).

This sequence belongs to the class-II aminoacyl-tRNA synthetase family. Tetramer of two alpha and two beta subunits.

The protein localises to the cytoplasm. The catalysed reaction is tRNA(Gly) + glycine + ATP = glycyl-tRNA(Gly) + AMP + diphosphate. The chain is Glycine--tRNA ligase alpha subunit from Salmonella agona (strain SL483).